Consider the following 458-residue polypeptide: Photosystem II CP43 reaction center protein (458 aa).

Transmembrane regions (helical) follow at residues 54-78, 119-140, 163-185, 240-260, and 276-297; these read LFEVAHFTPEKPLYEQGDILLPHLA, LRGPETLEQYSDFFSQDWKDKN, KAMFFGGLYDPWVPGGGGVRVIT, RPFNWARRSLVWSGEAYLSYS, and WFNNTVYPSEFYGPTGSEASQA. Glu352 provides a ligand contact to [CaMn4O5] cluster. Residues 432 to 456 form a helical membrane-spanning segment; sequence RARAAAAGFEKGIDRKTEPVLSMSD.

The protein belongs to the PsbB/PsbC family. PsbC subfamily. PSII is composed of 1 copy each of membrane proteins PsbA, PsbB, PsbC, PsbD, PsbE, PsbF, PsbH, PsbI, PsbJ, PsbK, PsbL, PsbM, PsbT, PsbX, PsbY, PsbZ, Psb30/Ycf12, peripheral proteins PsbO, CyanoQ (PsbQ), PsbU, PsbV and a large number of cofactors. It forms dimeric complexes. It depends on Binds multiple chlorophylls and provides some of the ligands for the Ca-4Mn-5O cluster of the oxygen-evolving complex. It may also provide a ligand for a Cl- that is required for oxygen evolution. PSII binds additional chlorophylls, carotenoids and specific lipids. as a cofactor.

It is found in the cellular thylakoid membrane. One of the components of the core complex of photosystem II (PSII). It binds chlorophyll and helps catalyze the primary light-induced photochemical processes of PSII. PSII is a light-driven water:plastoquinone oxidoreductase, using light energy to abstract electrons from H(2)O, generating O(2) and a proton gradient subsequently used for ATP formation. The chain is Photosystem II CP43 reaction center protein from Prochlorothrix hollandica.